Reading from the N-terminus, the 150-residue chain is Small ribosomal subunit protein uS11 (150 aa).

The interval 130–150 is disordered; that stretch reads DVTPIPSDSTRRKSGRRGRRL. Basic residues predominate over residues 141–150; the sequence is RKSGRRGRRL.

This sequence belongs to the universal ribosomal protein uS11 family.

This chain is Small ribosomal subunit protein uS11 (RPS14), found in Lupinus luteus (European yellow lupine).